The following is a 192-amino-acid chain: Protein MTH_857 (192 aa).

Positions 9–192 constitute an AMMECR1 domain; sequence DEGRTLVKIA…FQAQIFHEDG (184 aa).

The polypeptide is Protein MTH_857 (Methanothermobacter thermautotrophicus (strain ATCC 29096 / DSM 1053 / JCM 10044 / NBRC 100330 / Delta H) (Methanobacterium thermoautotrophicum)).